Here is a 256-residue protein sequence, read N- to C-terminus: Type III pantothenate kinase (256 aa).

ATP is bound at residue 6 to 13; it reads DCGNTNTV. 107–110 contacts substrate; it reads GPDR. Aspartate 109 serves as the catalytic Proton acceptor. A K(+)-binding site is contributed by aspartate 129. An ATP-binding site is contributed by threonine 132. Residue threonine 184 coordinates substrate.

Belongs to the type III pantothenate kinase family. Homodimer. The cofactor is NH4(+). It depends on K(+) as a cofactor.

The protein resides in the cytoplasm. It catalyses the reaction (R)-pantothenate + ATP = (R)-4'-phosphopantothenate + ADP + H(+). Its pathway is cofactor biosynthesis; coenzyme A biosynthesis; CoA from (R)-pantothenate: step 1/5. Its function is as follows. Catalyzes the phosphorylation of pantothenate (Pan), the first step in CoA biosynthesis. This is Type III pantothenate kinase from Dinoroseobacter shibae (strain DSM 16493 / NCIMB 14021 / DFL 12).